The primary structure comprises 153 residues: Endoribonuclease YbeY (153 aa).

The Zn(2+) site is built by His118, His122, and His128.

The protein belongs to the endoribonuclease YbeY family. Zn(2+) serves as cofactor.

It localises to the cytoplasm. Its function is as follows. Single strand-specific metallo-endoribonuclease involved in late-stage 70S ribosome quality control and in maturation of the 3' terminus of the 16S rRNA. In Chloroflexus aggregans (strain MD-66 / DSM 9485), this protein is Endoribonuclease YbeY.